The following is a 495-amino-acid chain: MSSSMCLARCSASLSAGNFPSRMFMGRLHAQRRTRTLQLRCAASLLPDQPTLAASSAISPVPSDLPEVLGDALHRLGAIYVLADASASTAAAAVMPTAVDSAAGAAPQRAGGWVAPVADALEQVLYALQEGLDKLHVPYSYGYSIILLTLIVKLLTYPLTKQQVESAMAVQALKPRIDLIKDRFGEDKDKIQKETSVLYEQAGVNPLAGCLPTLATIPIFIGLFSSLTNVANDGLLDTQGFYFVPSLAGPTTMAMRQSGLGTSWLWPLGPDGAPPIGWEDAAAYLTLPLLLVAVQYASSSVTSPPIDPKDENANTQRALLVFLPLMVGWFSLNVPAGLSLYYLANTVLSSAIQIYLKKLGGANVVMNELGPVTKPGSGRRNGVAAGEWSVWKPATVLTTAEAAKARAEAEEAVERAREAAEEAAAAAAFDNASVSLSVDDSTAAIAGTATMAVTAGAPAAAMDPSKVNRRCKRRRLTSLVQDGSTASAAVAGASA.

The chain crosses the membrane as a helical span at residues 76–96; that stretch reads LGAIYVLADASASTAAAAVMP. At 97–206 the chain is on the stromal side; the sequence is TAVDSAAGAA…VLYEQAGVNP (110 aa). The helical transmembrane segment at 207-227 threads the bilayer; that stretch reads LAGCLPTLATIPIFIGLFSSL. Over 228-273 the chain is Lumenal; it reads TNVANDGLLDTQGFYFVPSLAGPTTMAMRQSGLGTSWLWPLGPDGA. Residues 274 to 294 form a helical membrane-spanning segment; sequence PPIGWEDAAAYLTLPLLLVAV. Over 295-317 the chain is Stromal; sequence QYASSSVTSPPIDPKDENANTQR. The helical transmembrane segment at 318–338 threads the bilayer; sequence ALLVFLPLMVGWFSLNVPAGL. Over 339 to 441 the chain is Lumenal; it reads SLYYLANTVL…ASVSLSVDDS (103 aa). A helical membrane pass occupies residues 442–462; it reads TAAIAGTATMAVTAGAPAAAM. The Stromal portion of the chain corresponds to 463–495; that stretch reads DPSKVNRRCKRRRLTSLVQDGSTASAAVAGASA.

Belongs to the OXA1/ALB3/YidC (TC 2.A.9.2) family. As to quaternary structure, associates with the LHCII complex and with the psaE subunit of the LHCI complex.

It localises to the plastid. It is found in the chloroplast thylakoid membrane. In terms of biological role, required for the insertion of some light-harvesting complexes (LHC) proteins into the chloroplast thylakoid membrane. Essential for the assembly and activity of LHC I and II. Its function is probably partly distinct from that of ALB3.2. The chain is Inner membrane ALBINO3-like protein 1, chloroplastic (ALB3.1) from Chlamydomonas reinhardtii (Chlamydomonas smithii).